The primary structure comprises 336 residues: Eukaryotic translation initiation factor 3 subunit I (336 aa).

WD repeat units lie at residues 8-47, 50-91, 146-185, 190-229, and 287-326; these read GHER…RLGT, GHLG…KVWE, CTES…QLEN, EFDH…ILKT, and GHFG…FDFM.

It belongs to the eIF-3 subunit I family. Component of the eukaryotic translation initiation factor 3 (eIF-3) complex.

The protein localises to the cytoplasm. Component of the eukaryotic translation initiation factor 3 (eIF-3) complex, which is involved in protein synthesis of a specialized repertoire of mRNAs and, together with other initiation factors, stimulates binding of mRNA and methionyl-tRNAi to the 40S ribosome. The eIF-3 complex specifically targets and initiates translation of a subset of mRNAs involved in cell proliferation. The polypeptide is Eukaryotic translation initiation factor 3 subunit I (tif34) (Emericella nidulans (strain FGSC A4 / ATCC 38163 / CBS 112.46 / NRRL 194 / M139) (Aspergillus nidulans)).